A 285-amino-acid polypeptide reads, in one-letter code: MTKEMQTLALVPQGSLEAYIRAANAYPMLTAEEERELAERLHYQGDLDAAKQLILSHLRFVAHIARNYSGYGLPQADLIQEGNIGLMKAVRRFNPEVGVRLVSFAVHWIKAEIHEYVLRNWRIVKVATTKAQRKLFFNLRKTKQRLGWFNQDEVELVARELGVTSKDVREMESRMAAQDMTFDPTPDDEARDGQSMAPVLYLQDKSSDFAEGIEEDNWESNAADKLAYALEGLDERSQHIIRARWLDDDNKSTLQELADQYGVSAERVRQLEKNAMKKLKMAIEA.

A sigma-70 factor domain-2 region spans residues 53 to 122 (LILSHLRFVA…IHEYVLRNWR (70 aa)). Residues 77 to 80 (DLIQ) carry the Interaction with polymerase core subunit RpoC motif. Positions 229–281 (ALEGLDERSQHIIRARWLDDDNKSTLQELADQYGVSAERVRQLEKNAMKKLKM) are sigma-70 factor domain-4. A DNA-binding region (H-T-H motif) is located at residues 254–273 (LQELADQYGVSAERVRQLEK).

The protein belongs to the sigma-70 factor family. RpoH subfamily. Interacts with the RNA polymerase core enzyme.

It is found in the cytoplasm. In terms of biological role, sigma factors are initiation factors that promote the attachment of RNA polymerase to specific initiation sites and are then released. This sigma factor is involved in regulation of expression of heat shock genes. In Serratia marcescens, this protein is RNA polymerase sigma factor RpoH.